The chain runs to 361 residues: Adenosine kinase (361 aa).

Residues Pro-7–Glu-15 carry the Nuclear localization signal motif. Asp-34 contacts adenosine. Ser-48 serves as a coordination point for Mg(2+). At Tyr-76 the chain carries Phosphotyrosine. 2 residues coordinate Mg(2+): Asp-146 and Asn-147. Gln-305 lines the adenosine pocket. Residue Asp-316 is part of the active site. The Proton acceptor role is filled by Asp-316.

Belongs to the carbohydrate kinase PfkB family. As to quaternary structure, monomer. Mg(2+) serves as cofactor. In terms of processing, the N-terminus is blocked.

The protein localises to the nucleus. The catalysed reaction is adenosine + ATP = AMP + ADP + H(+). Its pathway is purine metabolism; AMP biosynthesis via salvage pathway; AMP from adenosine: step 1/1. Activity is inhibited by 5-iodotubercidin and 5'-amino-5'-deoxyadenosine. Catalyzes the phosphorylation of the purine nucleoside adenosine at the 5' position in an ATP-dependent manner. Serves as a potential regulator of concentrations of extracellular adenosine and intracellular adenine nucleotides. The protein is Adenosine kinase (ADK) of Cricetulus griseus (Chinese hamster).